Consider the following 692-residue polypeptide: Elongation factor G (692 aa).

In terms of domain architecture, tr-type G spans 8-282 (ENTRNIGIMA…AVIDYLPSPV (275 aa)). GTP contacts are provided by residues 17-24 (AHIDAGKT), 81-85 (DTPGH), and 135-138 (NKMD).

The protein belongs to the TRAFAC class translation factor GTPase superfamily. Classic translation factor GTPase family. EF-G/EF-2 subfamily.

Its subcellular location is the cytoplasm. Its function is as follows. Catalyzes the GTP-dependent ribosomal translocation step during translation elongation. During this step, the ribosome changes from the pre-translocational (PRE) to the post-translocational (POST) state as the newly formed A-site-bound peptidyl-tRNA and P-site-bound deacylated tRNA move to the P and E sites, respectively. Catalyzes the coordinated movement of the two tRNA molecules, the mRNA and conformational changes in the ribosome. The sequence is that of Elongation factor G from Lysinibacillus sphaericus (strain C3-41).